The chain runs to 172 residues: Myosin regulatory light chain 2, smooth muscle major isoform (172 aa).

The span at 1 to 16 (MSSKRAKAKTTKKRPQ) shows a compositional bias: basic residues. The segment at 1-20 (MSSKRAKAKTTKKRPQRATS) is disordered. Residue Ser-2 is modified to N-acetylserine. EF-hand domains follow at residues 29–64 (SQIQEFKEAFNMIDQNRDGFIDKEDLHDMLASMGKN), 98–133 (DPEDVIRNAFACFDEEASGFIHEDHLRELLTTMGDR), and 134–169 (FTDEEVDEMYREAPIDKKGNFNYVEFTRILKHGAKD). Ca(2+)-binding residues include Asp-42, Asn-44, Asp-46, and Asp-53.

As to quaternary structure, myosin is a hexamer of 2 heavy chains and 4 light chains.

Myosin regulatory subunit that plays an important role in regulation of both smooth muscle and nonmuscle cell contractile activity. Implicated in cytokinesis, receptor capping, and cell locomotion. The chain is Myosin regulatory light chain 2, smooth muscle major isoform from Gallus gallus (Chicken).